A 658-amino-acid chain; its full sequence is UvrABC system protein B (658 aa).

The 390-residue stretch at 25–414 (KSLKNNNHYQ…LSKKNVAEQI (390 aa)) folds into the Helicase ATP-binding domain. Residue 38–45 (GVTGSGKT) coordinates ATP. Positions 91 to 114 (HFDYYQPESYIPRRDLFIEKDSSI) match the Beta-hairpin motif. The Helicase C-terminal domain occupies 433–607 (QVQDLFDEIK…ELKLRDDEIR (175 aa)). The region spanning 623-658 (EKIIKELDKKMRECTKNLDFEEAMRLRDEIAQLRTL) is the UVR domain.

This sequence belongs to the UvrB family. Forms a heterotetramer with UvrA during the search for lesions. Interacts with UvrC in an incision complex.

Its subcellular location is the cytoplasm. The UvrABC repair system catalyzes the recognition and processing of DNA lesions. A damage recognition complex composed of 2 UvrA and 2 UvrB subunits scans DNA for abnormalities. Upon binding of the UvrA(2)B(2) complex to a putative damaged site, the DNA wraps around one UvrB monomer. DNA wrap is dependent on ATP binding by UvrB and probably causes local melting of the DNA helix, facilitating insertion of UvrB beta-hairpin between the DNA strands. Then UvrB probes one DNA strand for the presence of a lesion. If a lesion is found the UvrA subunits dissociate and the UvrB-DNA preincision complex is formed. This complex is subsequently bound by UvrC and the second UvrB is released. If no lesion is found, the DNA wraps around the other UvrB subunit that will check the other stand for damage. In Helicobacter pylori (strain ATCC 700392 / 26695) (Campylobacter pylori), this protein is UvrABC system protein B.